Consider the following 599-residue polypeptide: Elongation factor 4 (599 aa).

The region spanning 2–184 (KHIRNFSIIA…RLVRDIPPPQ (183 aa)) is the tr-type G domain. Residues 14–19 (DHGKST) and 131–134 (NKID) contribute to the GTP site.

The protein belongs to the TRAFAC class translation factor GTPase superfamily. Classic translation factor GTPase family. LepA subfamily.

The protein resides in the cell inner membrane. The enzyme catalyses GTP + H2O = GDP + phosphate + H(+). Required for accurate and efficient protein synthesis under certain stress conditions. May act as a fidelity factor of the translation reaction, by catalyzing a one-codon backward translocation of tRNAs on improperly translocated ribosomes. Back-translocation proceeds from a post-translocation (POST) complex to a pre-translocation (PRE) complex, thus giving elongation factor G a second chance to translocate the tRNAs correctly. Binds to ribosomes in a GTP-dependent manner. In Yersinia enterocolitica serotype O:8 / biotype 1B (strain NCTC 13174 / 8081), this protein is Elongation factor 4.